The following is a 386-amino-acid chain: Protein salvador homolog 1 (386 aa).

Phosphoserine occurs at positions 95 and 137. WW domains are found at residues 200-233 and 235-268; these read LPLPPGWSVDWTMRGRKYYIDHNTNTTHWSHPLE and EGLPPGWERVESSEFGTYYVDHTNKRAQYRHPCA. T211 is subject to Phosphothreonine. Residues 322-369 enclose the SARAH domain; the sequence is ILKWELFQLADLDTYQGMLKLLFMKELEQIVKLYEAYRQALLTELENR. Residues 345-374 are a coiled coil; that stretch reads MKELEQIVKLYEAYRQALLTELENRKQRQQ.

As to quaternary structure, homodimer. Stabilized through interaction with STK3/MST2 or STK4/MST1. Interacts (via SARAH domain) with isoform 1 of NEK2. Interacts with ESR1 only in the presence of STK3/MST2. Interacts with WTIP and AJUBA. In terms of processing, phosphorylated by STK3/MST2 and STK4/MST1. Phosphorylation is not required for SAV1 stability and may increase the number of protein binding sites on the scaffold molecule. In terms of tissue distribution, ubiquitously expressed in adult tissues with the highest level found in testis.

Its subcellular location is the nucleus. It localises to the cytoplasm. Functionally, regulator of STK3/MST2 and STK4/MST1 in the Hippo signaling pathway which plays a pivotal role in organ size control and tumor suppression by restricting proliferation and promoting apoptosis. The core of this pathway is composed of a kinase cascade wherein STK3/MST2 and STK4/MST1, in complex with its regulatory protein SAV1, phosphorylates and activates LATS1/2 in complex with its regulatory protein MOB1, which in turn phosphorylates and inactivates YAP1 oncoprotein and WWTR1/TAZ. Phosphorylation of YAP1 by LATS1/2 inhibits its translocation into the nucleus to regulate cellular genes important for cell proliferation, cell death, and cell migration. SAV1 is required for STK3/MST2 and STK4/MST1 activation and promotes cell-cycle exit and terminal differentiation in developing epithelial tissues. Plays a role in centrosome disjunction by regulating the localization of NEK2 to centrosomes, and its ability to phosphorylate CROCC and CEP250. In conjunction with STK3/MST2, activates the transcriptional activity of ESR1 through the modulation of its phosphorylation. The polypeptide is Protein salvador homolog 1 (Sav1) (Mus musculus (Mouse)).